The sequence spans 178 residues: Endoribonuclease YbeY (178 aa).

3 residues coordinate Zn(2+): histidine 118, histidine 122, and histidine 128. Residues 158–178 (ADRQSEKDRRLLDKSRYFDEP) are disordered.

It belongs to the endoribonuclease YbeY family. Zn(2+) is required as a cofactor.

The protein localises to the cytoplasm. Single strand-specific metallo-endoribonuclease involved in late-stage 70S ribosome quality control and in maturation of the 3' terminus of the 16S rRNA. The chain is Endoribonuclease YbeY from Mycolicibacterium smegmatis (strain ATCC 700084 / mc(2)155) (Mycobacterium smegmatis).